The primary structure comprises 221 residues: 6-phosphogluconate phosphatase (221 aa).

Residue D10 is the Nucleophile of the active site. The Mg(2+) site is built by D10, D12, and D167. 10 to 12 (DCD) contributes to the substrate binding site.

It belongs to the HAD-like hydrolase superfamily. CbbY/CbbZ/Gph/YieH family. It depends on Mg(2+) as a cofactor. The cofactor is Mn(2+). Co(2+) is required as a cofactor. Zn(2+) serves as cofactor.

In terms of biological role, catalyzes strongly the dephosphorylation of 6-phosphogluconate (6P-Glu) and slightly the dephosphorylation of dihydroxyacetone phosphate (DHAP) and phosphoenolpyruvate (PEP). Also hydrolyzes both purines (GMP and IMP) and pyrimidines as secondary substrates. The sequence is that of 6-phosphogluconate phosphatase (yieH) from Escherichia coli (strain K12).